The chain runs to 277 residues: Phycobilisome rod-core linker polypeptide CpcG1 (277 aa).

Residues 11-189 enclose the PBS-linker domain; the sequence is RTLDQRVVSY…YWRNKEISLS (179 aa).

This sequence belongs to the phycobilisome linker protein family. As to quaternary structure, the phycobilisome is a hemidiscoidal structure that is composed of two distinct substructures: a core complex and a number of rods radiating from the core.

It localises to the cellular thylakoid membrane. In terms of biological role, rod-core linker protein required for attachment of phycocyanin to allophycocyanin in cores of phycobilisomes. Linker polypeptides determine the state of aggregation and the location of the disk-shaped phycobiliprotein units within the phycobilisome and modulate their spectroscopic properties in order to mediate a directed and optimal energy transfer. This Thermosynechococcus vestitus (strain NIES-2133 / IAM M-273 / BP-1) protein is Phycobilisome rod-core linker polypeptide CpcG1 (cpcG1).